Here is a 732-residue protein sequence, read N- to C-terminus: Prolyl endopeptidase-like (732 aa).

Active-site charge relay system residues include S575, D661, and H707.

Belongs to the peptidase S9A family. As to quaternary structure, homodimer.

Its subcellular location is the cytoplasm. It localises to the cytosol. Functionally, serine peptidase whose precise substrate specificity remains unclear. Does not cleave peptides after a arginine or lysine residue. Regulates trans-Golgi network morphology and sorting by regulating the membrane binding of the AP-1 complex. May play a role in the regulation of synaptic vesicle exocytosis. The polypeptide is Prolyl endopeptidase-like (PREPL) (Gallus gallus (Chicken)).